A 316-amino-acid polypeptide reads, in one-letter code: Petrobactin import system permease protein YclN (316 aa).

8 helical membrane-spanning segments follow: residues 5–25 (YLFILLIILAVTSVFIGVEDL), 49–69 (LISIVIAGLSMSICGLIMQQI), 94–114 (LLLFTSASPLIKMLVAFVFAL), 133–153 (IFIPLVGLMLGNIVSSIATFI), 181–201 (LLYLSIPLVIIAYVYADKFTL), 224–244 (LIIVSLITSLVILTVGMLPFL), 268–288 (VLLGAVFVLFCDILGRIIIFP), and 290–310 (EISIGLMVGIIGSGIFLFMLL).

The protein belongs to the binding-protein-dependent transport system permease family. FecCD subfamily. The complex is composed of two ATP-binding proteins (YclP), two transmembrane proteins (YclN and YclO) and a solute-binding protein (YclQ).

It is found in the cell membrane. Part of the ABC transporter complex YclNOPQ involved in uptake of ferric-petrobactin. Petrobactin is a photoreactive 3,4-catecholate siderophore produced by many members of the B.cereus group, including B.anthracis. Probably responsible for the translocation of the substrate across the membrane. The chain is Petrobactin import system permease protein YclN (yclN) from Bacillus subtilis (strain 168).